A 716-amino-acid chain; its full sequence is Fatty acid oxidation complex subunit alpha (716 aa).

The enoyl-CoA hydratase/isomerase stretch occupies residues 1-189 (MIYQSPTIQV…KVGAIDAVVA (189 aa)). D296 contributes to the substrate binding site. Residues 311-716 (QAVNSAAVLG…AATNGSYYPA (406 aa)) are 3-hydroxyacyl-CoA dehydrogenase. NAD(+) contacts are provided by residues M324, D343, 400-402 (VVE), K407, and S429. The For 3-hydroxyacyl-CoA dehydrogenase activity role is filled by H450. Residue N453 participates in NAD(+) binding. Residues N500 and Y660 each coordinate substrate.

This sequence in the N-terminal section; belongs to the enoyl-CoA hydratase/isomerase family. It in the C-terminal section; belongs to the 3-hydroxyacyl-CoA dehydrogenase family. Heterotetramer of two alpha chains (FadB) and two beta chains (FadA).

It carries out the reaction a (3S)-3-hydroxyacyl-CoA + NAD(+) = a 3-oxoacyl-CoA + NADH + H(+). It catalyses the reaction a (3S)-3-hydroxyacyl-CoA = a (2E)-enoyl-CoA + H2O. The enzyme catalyses a 4-saturated-(3S)-3-hydroxyacyl-CoA = a (3E)-enoyl-CoA + H2O. The catalysed reaction is (3S)-3-hydroxybutanoyl-CoA = (3R)-3-hydroxybutanoyl-CoA. It carries out the reaction a (3Z)-enoyl-CoA = a 4-saturated (2E)-enoyl-CoA. It catalyses the reaction a (3E)-enoyl-CoA = a 4-saturated (2E)-enoyl-CoA. Its pathway is lipid metabolism; fatty acid beta-oxidation. Involved in the aerobic and anaerobic degradation of long-chain fatty acids via beta-oxidation cycle. Catalyzes the formation of 3-oxoacyl-CoA from enoyl-CoA via L-3-hydroxyacyl-CoA. It can also use D-3-hydroxyacyl-CoA and cis-3-enoyl-CoA as substrate. This Shewanella loihica (strain ATCC BAA-1088 / PV-4) protein is Fatty acid oxidation complex subunit alpha.